Here is a 313-residue protein sequence, read N- to C-terminus: Protein phosphatase PTC7 homolog fig (313 aa).

One can recognise a PPM-type phosphatase domain in the interval 47–307 (KEPLTDLQLR…DDITVILASL (261 aa)). 3 residues coordinate Mn(2+): Asp83, Gly84, and Asp229.

It belongs to the PP2C family. It depends on Mg(2+) as a cofactor. Requires Mn(2+) as cofactor.

The enzyme catalyses O-phospho-L-seryl-[protein] + H2O = L-seryl-[protein] + phosphate. It catalyses the reaction O-phospho-L-threonyl-[protein] + H2O = L-threonyl-[protein] + phosphate. This is Protein phosphatase PTC7 homolog fig from Drosophila virilis (Fruit fly).